A 529-amino-acid polypeptide reads, in one-letter code: Peptide chain release factor 3 (529 aa).

The tr-type G domain maps to 11–280; it reads AKRRTFAIIS…GLVKWAPAPM (270 aa). GTP is bound by residues 20-27, 88-92, and 142-145; these read SHPDAGKT, DTPGH, and NKLD.

The protein belongs to the TRAFAC class translation factor GTPase superfamily. Classic translation factor GTPase family. PrfC subfamily.

It localises to the cytoplasm. In terms of biological role, increases the formation of ribosomal termination complexes and stimulates activities of RF-1 and RF-2. It binds guanine nucleotides and has strong preference for UGA stop codons. It may interact directly with the ribosome. The stimulation of RF-1 and RF-2 is significantly reduced by GTP and GDP, but not by GMP. The sequence is that of Peptide chain release factor 3 from Photorhabdus laumondii subsp. laumondii (strain DSM 15139 / CIP 105565 / TT01) (Photorhabdus luminescens subsp. laumondii).